An 889-amino-acid polypeptide reads, in one-letter code: Alanine--tRNA ligase (889 aa).

Zn(2+) is bound by residues histidine 564, histidine 568, cysteine 677, and histidine 681.

The protein belongs to the class-II aminoacyl-tRNA synthetase family. Zn(2+) serves as cofactor.

Its subcellular location is the cytoplasm. The enzyme catalyses tRNA(Ala) + L-alanine + ATP = L-alanyl-tRNA(Ala) + AMP + diphosphate. Its function is as follows. Catalyzes the attachment of alanine to tRNA(Ala) in a two-step reaction: alanine is first activated by ATP to form Ala-AMP and then transferred to the acceptor end of tRNA(Ala). Also edits incorrectly charged Ser-tRNA(Ala) and Gly-tRNA(Ala) via its editing domain. The protein is Alanine--tRNA ligase of Rhodopseudomonas palustris (strain ATCC BAA-98 / CGA009).